The sequence spans 474 residues: Glycogen synthase (474 aa).

K12 provides a ligand contact to ADP-alpha-D-glucose.

This sequence belongs to the glycosyltransferase 1 family. Bacterial/plant glycogen synthase subfamily.

It catalyses the reaction [(1-&gt;4)-alpha-D-glucosyl](n) + ADP-alpha-D-glucose = [(1-&gt;4)-alpha-D-glucosyl](n+1) + ADP + H(+). Its pathway is glycan biosynthesis; glycogen biosynthesis. Functionally, synthesizes alpha-1,4-glucan chains using ADP-glucose. This chain is Glycogen synthase, found in Xanthomonas campestris pv. campestris (strain 8004).